We begin with the raw amino-acid sequence, 76 residues long: UPF0291 protein Aflv_1503 (76 aa).

Residues 56–76 form a disordered region; the sequence is DPNGNDVTPQKLKDSKKKRLH.

Belongs to the UPF0291 family.

The protein localises to the cytoplasm. The polypeptide is UPF0291 protein Aflv_1503 (Anoxybacillus flavithermus (strain DSM 21510 / WK1)).